The primary structure comprises 401 residues: tRNA(Met) cytidine acetate ligase (401 aa).

ATP is bound by residues 7-20, Gly-102, Asn-164, and Arg-189; that span reads IVEYNPFHNGHLYH.

Belongs to the TmcAL family.

Its subcellular location is the cytoplasm. It catalyses the reaction cytidine(34) in elongator tRNA(Met) + acetate + ATP = N(4)-acetylcytidine(34) in elongator tRNA(Met) + AMP + diphosphate. Functionally, catalyzes the formation of N(4)-acetylcytidine (ac(4)C) at the wobble position of elongator tRNA(Met), using acetate and ATP as substrates. First activates an acetate ion to form acetyladenylate (Ac-AMP) and then transfers the acetyl group to tRNA to form ac(4)C34. The chain is tRNA(Met) cytidine acetate ligase from Thermoanaerobacter sp. (strain X514).